The chain runs to 627 residues: uncharacterized protein (627 aa).

In terms of domain architecture, WH1 spans 21–136; sequence GISASDKILS…NSVCKRQTRS (116 aa). The tract at residues 310–347 is disordered; that stretch reads RGSLSTPRIPTHRDSYRSATKPDTVPKQTPPPTHNSYV.

This is an uncharacterized protein from Caenorhabditis elegans.